The following is a 958-amino-acid chain: Valine--tRNA ligase (958 aa).

The 'HIGH' region signature appears at 42 to 52 (PNVTGSLHMGH). The 'KMSKS' region motif lies at 554 to 558 (KMSKS). Position 557 (lysine 557) interacts with ATP. A coiled-coil region spans residues 887–956 (LVDVAAEMAR…TEQKAEFAKL (70 aa)).

This sequence belongs to the class-I aminoacyl-tRNA synthetase family. ValS type 1 subfamily. In terms of assembly, monomer.

It is found in the cytoplasm. It carries out the reaction tRNA(Val) + L-valine + ATP = L-valyl-tRNA(Val) + AMP + diphosphate. Catalyzes the attachment of valine to tRNA(Val). As ValRS can inadvertently accommodate and process structurally similar amino acids such as threonine, to avoid such errors, it has a 'posttransfer' editing activity that hydrolyzes mischarged Thr-tRNA(Val) in a tRNA-dependent manner. This is Valine--tRNA ligase from Shewanella oneidensis (strain ATCC 700550 / JCM 31522 / CIP 106686 / LMG 19005 / NCIMB 14063 / MR-1).